Reading from the N-terminus, the 686-residue chain is WD repeat-containing protein 93 (686 aa).

Positions 1–10 are enriched in polar residues; the sequence is MSFPRGSQTQ. The tract at residues 1–40 is disordered; that stretch reads MSFPRGSQTQKIKHPIGTRKGPLEVPPPTEKDWPKDDEQD. Positions 29–40 are enriched in basic and acidic residues; the sequence is TEKDWPKDDEQD. A WD repeat occupies 410 to 449; the sequence is PCAAPIAVSQLSCSSSYLVLACEDGVLTLWDLAKGFPLGV.

The protein is WD repeat-containing protein 93 (WDR93) of Homo sapiens (Human).